Consider the following 185-residue polypeptide: Acireductone dioxygenase (185 aa).

Fe(2+)-binding residues include His97, His99, Glu103, and His141. Residues His97, His99, Glu103, and His141 each contribute to the Ni(2+) site.

The protein belongs to the acireductone dioxygenase (ARD) family. In terms of assembly, monomer. Fe(2+) serves as cofactor. Ni(2+) is required as a cofactor.

It catalyses the reaction 1,2-dihydroxy-5-(methylsulfanyl)pent-1-en-3-one + O2 = 3-(methylsulfanyl)propanoate + CO + formate + 2 H(+). The enzyme catalyses 1,2-dihydroxy-5-(methylsulfanyl)pent-1-en-3-one + O2 = 4-methylsulfanyl-2-oxobutanoate + formate + 2 H(+). Its pathway is amino-acid biosynthesis; L-methionine biosynthesis via salvage pathway; L-methionine from S-methyl-5-thio-alpha-D-ribose 1-phosphate: step 5/6. In terms of biological role, catalyzes 2 different reactions between oxygen and the acireductone 1,2-dihydroxy-3-keto-5-methylthiopentene (DHK-MTPene) depending upon the metal bound in the active site. Fe-containing acireductone dioxygenase (Fe-ARD) produces formate and 2-keto-4-methylthiobutyrate (KMTB), the alpha-ketoacid precursor of methionine in the methionine recycle pathway. Ni-containing acireductone dioxygenase (Ni-ARD) produces methylthiopropionate, carbon monoxide and formate, and does not lie on the methionine recycle pathway. In Stenotrophomonas maltophilia (strain K279a), this protein is Acireductone dioxygenase.